A 111-amino-acid polypeptide reads, in one-letter code: UPF0342 protein SAG1376 (111 aa).

Residues 52–63 (QEMMQSGQMPSQ) show a composition bias toward polar residues. The tract at residues 52–71 (QEMMQSGQMPSQEEQDEMSK) is disordered.

This sequence belongs to the UPF0342 family.

In Streptococcus agalactiae serotype V (strain ATCC BAA-611 / 2603 V/R), this protein is UPF0342 protein SAG1376.